The following is a 405-amino-acid chain: Potassium channel subfamily K member 18 (405 aa).

The chain crosses the membrane as a helical span at residues 43–63 (LPGLCFLCCLVTYALVGAALF). A glycan (N-linked (GlcNAc...) asparagine) is linked at N94. Positions 125-151 (FLSALFFCCTVFSTVGYGHMYPVTRLG) form an intramembrane region, pore-forming. K(+) is bound by residues T138, V139, G140, and Y141. The selectivity filter 1 stretch occupies residues 138–143 (TVGYGH). Residues 153–173 (FLCMLYALFGIPLMFLVLTDI) form a helical membrane-spanning segment. The interval 221-226 (PQIVID) is interaction with calcineurin. An interaction with YWHAH region spans residues 272 to 277 (RSNSCP). S275 and S287 each carry phosphoserine. A helical membrane pass occupies residues 304-324 (IPLPVIALVIFAYISCAAAIL). Positions 337–351 (FYFCFVTLTTIGFGD) form an intramembrane region, pore-forming. Positions 346–351 (TIGFGD) are selectivity filter 2. The chain crosses the membrane as a helical span at residues 358–378 (HFFLFFSIYIIVGMEILFIAF).

The protein belongs to the two pore domain potassium channel (TC 1.A.1.8) family. In terms of assembly, homodimer. Heterodimer with KCNK2. Heterodimer with KCNK10. Interacts with calcineurin. Interacts with YWHAH, in a phosphorylation-dependent manner. In terms of processing, phosphorylation of Ser-275 is required for the binding of 14-3-3eta/YWHAH. Calcineurin-mediated dephosphorylation of Ser-287 enhances channel activity. Post-translationally, N-glycosylated.

It localises to the cell membrane. It carries out the reaction K(+)(in) = K(+)(out). With respect to regulation, activated by volatile anesthetics, such as isoflurane and inhibited by local anesthetics such as bupivacaine and lidocaine. Inhibited by extracellular acidic pH. Inhibited by Zn(2+) ions. K(+) channel that conducts outward and inward rectifying currents at depolarized and hyperpolarized membrane potentials, respectively. The outward rectifying currents are voltage-dependent, coupled to K(+) electrochemical gradient across the membrane, whereas the inward currents can be induced in response to activation of Ca(2+)-mobilizing receptors. Homo- and heterodimerizes to form functional channels with distinct regulatory and gating properties. In trigeminal ganglia sensory neurons, the heterodimers of KCNK18/TRESK and KCNK2/TREK-1 or KCNK10/TREK-2 inhibit neuronal firing and neurogenic inflammation by stabilizing the resting membrane potential at K(+) equilibrium potential as well as by regulating the threshold of action potentials and the spike frequency. In thymocytes, conducts K(+) currents upon T cell receptor (TCR) signaling leading to sustained Ca(2+) influx and NF-kappa-B activation, FOXP3 transcription and positive selection of regulatory T cell (Treg) progenitor subsets. Appears to mediate the analgesics effects of hydroxy-alpha-sanshool, a metabolite naturally present in Schezuan pepper and other Xanthoxylum plants. The chain is Potassium channel subfamily K member 18 (Kcnk18) from Rattus norvegicus (Rat).